The chain runs to 78 residues: HssA/B-like protein 29 (78 aa).

Positions 1–31 are disordered; sequence MTLFSSITSISKTNTSSKSSLNSFSGSSLSM.

The protein belongs to the hssA/B family.

The sequence is that of HssA/B-like protein 29 (hssl29) from Dictyostelium discoideum (Social amoeba).